The primary structure comprises 614 residues: UvrABC system protein C (614 aa).

The GIY-YIG domain maps to 26–104 (NLPGVYKMLG…IKEHRPPYNV (79 aa)). In terms of domain architecture, UVR spans 215–250 (SDIHTTLIEKMEHSAEALDFEKAAFYRDQLSMLREV).

This sequence belongs to the UvrC family. As to quaternary structure, interacts with UvrB in an incision complex.

It is found in the cytoplasm. Functionally, the UvrABC repair system catalyzes the recognition and processing of DNA lesions. UvrC both incises the 5' and 3' sides of the lesion. The N-terminal half is responsible for the 3' incision and the C-terminal half is responsible for the 5' incision. This chain is UvrABC system protein C, found in Psychrobacter sp. (strain PRwf-1).